A 119-amino-acid chain; its full sequence is Large ribosomal subunit protein uL18 (119 aa).

Residues 1 to 20 are disordered; the sequence is MSQIDKAARRQKIKARSRAT. Residues 9–19 show a composition bias toward basic residues; it reads RRQKIKARSRA.

The protein belongs to the universal ribosomal protein uL18 family. In terms of assembly, part of the 50S ribosomal subunit; part of the 5S rRNA/L5/L18/L25 subcomplex. Contacts the 5S and 23S rRNAs.

In terms of biological role, this is one of the proteins that bind and probably mediate the attachment of the 5S RNA into the large ribosomal subunit, where it forms part of the central protuberance. The sequence is that of Large ribosomal subunit protein uL18 from Chlorobaculum parvum (strain DSM 263 / NCIMB 8327) (Chlorobium vibrioforme subsp. thiosulfatophilum).